We begin with the raw amino-acid sequence, 858 residues long: MSVVGLDVGSQSCYIAVARAGGIETIANEFSDRCTPSVISFGPKNRTIGVAAKNQQITHANNTVSSFKRFHGRAFSDPFIQKEKESLSYDLVPMKNGGVGIKVMYMDEEHLFSVEQITAMLLTKLKETAENNLKKPVTDCVISVPSFFTDAERRSVLDAAQIVGLNCLRLMNDMTAVALNYGIYKQDLPNADEKPQGSGVCGHGPSSFQVSACAFNKGKLKVLGTAFDPFLGGKNFDEKLVEHFCAEFKTKYKLDAKSKIRALLRLHQECEKLKKLMSSNSTDLPLNIECFMNDKDVSAKMNRSQFEELCAELLQKIEVPLHSLMEQTHLKTEDVSAIEIVGGATRIPAVKERIAKFFGKDVSTTLNADEAVARGCALQCAILSPAFKVREFSVTDAVPFPISLVWNHDSEETEGVHEVFSRNHAAPFSKVLTFLRRGPFELEAFYSDPQGVPYPEAKIGRFVVQNVSAQKDGEKSKVKVKVRVNTHGIFTISTASMVEKVPTEEDDGSSVEADMECPNQKPAESSDVDKNSQQDNSEAGTQPQVQTDGQQTSQSPPSPELPSEENKIPDADKANEKKVDQPPEAKKPKIKVVNVELPVEANLVWQLGRDLLNMYIETEGKMIMQDKLEKERNDAKNAVEECVYEFRDKLCGPYEKFICQQEHEKFLRLLTETEDWLYEEGEDQAKQAYIDKLEELMKMGNPVKVRFQEAEERPKVLEELGQRLQHYAKIAADFRSKDEKYNHIDESEMKKVEKSVNEVMEWMNNVMNAQAKRSLDQDPVVRTHEIRAKVKELNNVCEPVVNQPKPKIESPKLERTPNGPNLDKKEDLEGKDNFGAEAPHQNGECHPNEKGSVNMDLD.

Residue serine 2 is modified to N-acetylserine. Lysine 471 is subject to N6-acetyllysine. Disordered stretches follow at residues 500–585 and 801–858; these read KVPT…PPEA and VNQP…MDLD. Residues 504-515 are compositionally biased toward acidic residues; the sequence is EEDDGSSVEADM. Residues serine 509 and serine 510 each carry the phosphoserine modification. Over residues 533-549 the composition is skewed to polar residues; the sequence is QQDNSEAGTQPQVQTDG. Phosphoserine is present on serine 558. 2 stretches are compositionally biased toward basic and acidic residues: residues 564–585 and 806–815; these read EENKIPDADKANEKKVDQPPEA and PKIESPKLER. At serine 810 the chain carries Phosphoserine. Phosphothreonine is present on threonine 816. A compositionally biased stretch (basic and acidic residues) spans 822–834; that stretch reads LDKKEDLEGKDNF.

The protein belongs to the heat shock protein 70 family. In terms of assembly, interacts with HSPA8/HSC70. Interacts with HSPA1A (via NBD) and HSPA1B (via NBD). In terms of processing, phosphorylation on Ser-509 may be important for regulation of the HSPA8/HSC70 chaperone activity. As to expression, predominantly expressed in the brain and also found in the liver.

The protein localises to the cytoplasm. Its function is as follows. Acts as a nucleotide-exchange factor (NEF) for chaperone proteins HSPA1A and HSPA1B, promoting the release of ADP from HSPA1A/B thereby triggering substrate release. Prevents the aggregation of denatured proteins in cells under severe stress, on which the ATP levels decrease markedly. Inhibits HSPA8/HSC70 ATPase and chaperone activities. The polypeptide is Heat shock protein 105 kDa (HSPH1) (Cricetulus griseus (Chinese hamster)).